A 445-amino-acid chain; its full sequence is Guanosine nucleotide diphosphate dissociation inhibitor 1 (445 aa).

It belongs to the Rab GDI family. In terms of assembly, interacts with the GDP-bound form of RABA5C (via C-terminus). Expressed in roots, rosette leaves, stems, floral buds and siliques.

Its function is as follows. Regulates the GDP/GTP exchange reaction of most RAB proteins by inhibiting the dissociation of GDP from them, and the subsequent binding of GTP. The sequence is that of Guanosine nucleotide diphosphate dissociation inhibitor 1 (GDI1) from Arabidopsis thaliana (Mouse-ear cress).